A 158-amino-acid chain; its full sequence is Leptin-B (158 aa).

The N-terminal stretch at 1 to 19 is a signal peptide; the sequence is MYMPLALVYASFLTLPAST. Cys114 and Cys158 form a disulfide bridge.

This sequence belongs to the leptin family. In terms of tissue distribution, highly expressed in the brain and eye. Expressed at low levels in muscle and skin.

It is found in the secreted. Its function is as follows. May function as part of a signaling pathway that acts to regulate the size of the body fat depot. This Oryzias latipes (Japanese rice fish) protein is Leptin-B.